The following is an 819-amino-acid chain: Ribosome-releasing factor 2, mitochondrial (819 aa).

A mitochondrion-targeting transit peptide spans 1-30 (MWKWNVRRWAGARVNISKNRLSVINVGSRY). The tr-type G domain maps to 39–327 (SKVRNIGIIA…AIVNYLPSPI (289 aa)). GTP is bound by residues 48-55 (AHIDAGKT), 113-117 (DTPGH), and 165-168 (NKMD).

This sequence belongs to the TRAFAC class translation factor GTPase superfamily. Classic translation factor GTPase family. EF-G/EF-2 subfamily.

It localises to the mitochondrion. Functionally, mitochondrial GTPase that mediates the disassembly of ribosomes from messenger RNA at the termination of mitochondrial protein biosynthesis. Not involved in the GTP-dependent ribosomal translocation step during translation elongation. The polypeptide is Ribosome-releasing factor 2, mitochondrial (Saccharomyces cerevisiae (strain RM11-1a) (Baker's yeast)).